Here is a 356-residue protein sequence, read N- to C-terminus: Cysteine protease XCP2 (356 aa).

Positions 1 to 26 (MALSSPSRILCFALALSAASLSLSFA) are cleaved as a signal peptide. Positions 27–137 (SSHDYSIVGY…AEFAYRDVEA (111 aa)) are cleaved as a propeptide — activation peptide. 3 disulfide bridges follow: cysteine 159-cysteine 201, cysteine 193-cysteine 234, and cysteine 292-cysteine 343. Cysteine 162 is a catalytic residue. Asparagine 181 carries N-linked (GlcNAc...) asparagine glycosylation. Catalysis depends on residues histidine 298 and asparagine 318.

The protein belongs to the peptidase C1 family. In terms of assembly, interacts with PRN2. Mostly expressed in roots, stems and flowers. Confined to tracheary elements, and specifically to xylem.

The protein resides in the vacuole. The protein localises to the cell membrane. Cysteine protease involved in xylem tracheary element (TE) autolysis during xylogenesis in roots. Participates in micro autolysis within the intact central vacuole before mega autolysis is initiated by tonoplast implosion. Involved in susceptibility to the bacterial plant pathogen Ralstonia solanacearum. In Arabidopsis thaliana (Mouse-ear cress), this protein is Cysteine protease XCP2.